Consider the following 258-residue polypeptide: Imidazole glycerol phosphate synthase subunit HisF (258 aa).

Residues Asp-11 and Asp-130 contribute to the active site.

The protein belongs to the HisA/HisF family. Heterodimer of HisH and HisF.

It localises to the cytoplasm. It carries out the reaction 5-[(5-phospho-1-deoxy-D-ribulos-1-ylimino)methylamino]-1-(5-phospho-beta-D-ribosyl)imidazole-4-carboxamide + L-glutamine = D-erythro-1-(imidazol-4-yl)glycerol 3-phosphate + 5-amino-1-(5-phospho-beta-D-ribosyl)imidazole-4-carboxamide + L-glutamate + H(+). Its pathway is amino-acid biosynthesis; L-histidine biosynthesis; L-histidine from 5-phospho-alpha-D-ribose 1-diphosphate: step 5/9. IGPS catalyzes the conversion of PRFAR and glutamine to IGP, AICAR and glutamate. The HisF subunit catalyzes the cyclization activity that produces IGP and AICAR from PRFAR using the ammonia provided by the HisH subunit. The protein is Imidazole glycerol phosphate synthase subunit HisF of Synechococcus sp. (strain CC9902).